A 207-amino-acid polypeptide reads, in one-letter code: Nitrile hydratase subunit alpha (207 aa).

Residues cysteine 110, cysteine 113, serine 114, and cysteine 115 each contribute to the Fe(3+) site. A Cysteine sulfinic acid (-SO2H) modification is found at cysteine 113. Residue cysteine 115 is modified to Cysteine sulfenic acid (-SOH).

Belongs to the nitrile hydratase subunit alpha family. In terms of assembly, heterodimer of an alpha and a beta chain. The cofactor is Fe(3+). Oxidation on Cys-113 is essential for the activity. In terms of processing, oxidation on Cys-115 stabilizes the Fe-NO ligand coordinated in the inactive form.

It carries out the reaction an aliphatic primary amide = an aliphatic nitrile + H2O. Its activity is regulated as follows. Inactivated by nitrosylation of the iron center in the dark and activated by photo-induced nitric oxide (NO) release. Inactivated by oxidation of Cys-115 to a sulfenic acid. NHase catalyzes the hydration of various nitrile compounds to the corresponding amides. Industrial production of acrylamide is now being developed using some of the enzymes of this class. This is Nitrile hydratase subunit alpha (nthA) from Rhodococcus erythropolis (Arthrobacter picolinophilus).